Reading from the N-terminus, the 509-residue chain is Maturase K (509 aa).

Belongs to the intron maturase 2 family. MatK subfamily.

Its subcellular location is the plastid. The protein resides in the chloroplast. Its function is as follows. Usually encoded in the trnK tRNA gene intron. Probably assists in splicing its own and other chloroplast group II introns. The protein is Maturase K of Anthocercis viscosa (Sticky tailflower).